Consider the following 146-residue polypeptide: Nucleoside diphosphate kinase (146 aa).

Residues Lys-11, Phe-59, Arg-87, Thr-93, Arg-104, and Asn-114 each coordinate ATP. Catalysis depends on His-117, which acts as the Pros-phosphohistidine intermediate.

It belongs to the NDK family. In terms of assembly, homotetramer. The cofactor is Mg(2+).

It is found in the cytoplasm. It carries out the reaction a 2'-deoxyribonucleoside 5'-diphosphate + ATP = a 2'-deoxyribonucleoside 5'-triphosphate + ADP. The enzyme catalyses a ribonucleoside 5'-diphosphate + ATP = a ribonucleoside 5'-triphosphate + ADP. Its function is as follows. Major role in the synthesis of nucleoside triphosphates other than ATP. The ATP gamma phosphate is transferred to the NDP beta phosphate via a ping-pong mechanism, using a phosphorylated active-site intermediate. This chain is Nucleoside diphosphate kinase, found in Anaeromyxobacter sp. (strain Fw109-5).